A 360-amino-acid chain; its full sequence is 3-dehydroquinate synthase (360 aa).

NAD(+) contacts are provided by residues Asp-70–Lys-75, Gly-104–Asp-108, Thr-128–Thr-129, Lys-141, and Lys-150. Glu-183, His-246, and His-263 together coordinate Zn(2+).

The protein belongs to the sugar phosphate cyclases superfamily. Dehydroquinate synthase family. Co(2+) serves as cofactor. It depends on Zn(2+) as a cofactor. NAD(+) is required as a cofactor.

It localises to the cytoplasm. It carries out the reaction 7-phospho-2-dehydro-3-deoxy-D-arabino-heptonate = 3-dehydroquinate + phosphate. Its pathway is metabolic intermediate biosynthesis; chorismate biosynthesis; chorismate from D-erythrose 4-phosphate and phosphoenolpyruvate: step 2/7. Its function is as follows. Catalyzes the conversion of 3-deoxy-D-arabino-heptulosonate 7-phosphate (DAHP) to dehydroquinate (DHQ). This chain is 3-dehydroquinate synthase, found in Acinetobacter baumannii (strain AYE).